Consider the following 559-residue polypeptide: NXPE family member 3 (559 aa).

Residues 1–30 form the signal peptide; it reads MWTNFFKLRLFCCLLAVLMVVVLVINVTQV. Residues asparagine 237, asparagine 292, and asparagine 346 are each glycosylated (N-linked (GlcNAc...) asparagine).

The protein belongs to the NXPE family.

It localises to the secreted. This Homo sapiens (Human) protein is NXPE family member 3 (NXPE3).